The following is a 243-amino-acid chain: Probable transcriptional regulator ycf27 (243 aa).

The Response regulatory domain occupies 7–120 (KILVVDDEAS…ELEARIRSVL (114 aa)). Asp56 carries the post-translational modification 4-aspartylphosphate. The segment at residues 76-94 (DVPIIMLTALGEVCDRITG) is a DNA-binding region (H-T-H motif). The ompR/PhoB-type DNA-binding region spans 135 to 236 (SGIISIGFLK…ARGTGYLFQR (102 aa)).

The protein resides in the plastid. It localises to the chloroplast. Probable promoter-specific protein mediating the interaction between DNA and RNA polymerase. This Pyropia yezoensis (Susabi-nori) protein is Probable transcriptional regulator ycf27 (ycf27).